We begin with the raw amino-acid sequence, 423 residues long: Histone acetyltransferase type B subunit 2 (423 aa).

WD repeat units lie at residues 138-174, 175-224, 228-268, 271-311, and 315-355; these read PHIE…TLEE, SKAQ…KPKS, SHDD…EPVK, PTAS…SPLH, and GHQD…AEQS. The interval 357 to 361 is interaction with the histone H4 N-terminus; the sequence is DDADD. The WD 6 repeat unit spans residues 372-412; the sequence is GHRSPVNEFSFNPQIPWLLASTEEDNVIQAWKVSMKLVNAS.

This sequence belongs to the WD repeat RBAP46/RBAP48/MSI1 family. In terms of assembly, component of the HAT-B complex composed of at least HAT1 and HAT2. The HAT-B complex binds to histone H4 tail.

The protein localises to the cytoplasm. It localises to the nucleus. In terms of biological role, regulatory subunit of the histone acetylase B (HAT-B) complex. The complex acetylates 'Lys-12' of histone H4 which is required for telomeric silencing. This is Histone acetyltransferase type B subunit 2 (HAT2) from Eremothecium gossypii (strain ATCC 10895 / CBS 109.51 / FGSC 9923 / NRRL Y-1056) (Yeast).